Consider the following 267-residue polypeptide: Putative hydro-lyase RALTA_B1245 (267 aa).

The protein belongs to the D-glutamate cyclase family.

This is Putative hydro-lyase RALTA_B1245 from Cupriavidus taiwanensis (strain DSM 17343 / BCRC 17206 / CCUG 44338 / CIP 107171 / LMG 19424 / R1) (Ralstonia taiwanensis (strain LMG 19424)).